A 179-amino-acid chain; its full sequence is Crossover junction endodeoxyribonuclease RuvC (179 aa).

Residues Asp-7, Glu-67, and Asp-140 contribute to the active site. Mg(2+) contacts are provided by Asp-7, Glu-67, and Asp-140.

The protein belongs to the RuvC family. Homodimer which binds Holliday junction (HJ) DNA. The HJ becomes 2-fold symmetrical on binding to RuvC with unstacked arms; it has a different conformation from HJ DNA in complex with RuvA. In the full resolvosome a probable DNA-RuvA(4)-RuvB(12)-RuvC(2) complex forms which resolves the HJ. Mg(2+) is required as a cofactor.

The protein resides in the cytoplasm. It catalyses the reaction Endonucleolytic cleavage at a junction such as a reciprocal single-stranded crossover between two homologous DNA duplexes (Holliday junction).. Functionally, the RuvA-RuvB-RuvC complex processes Holliday junction (HJ) DNA during genetic recombination and DNA repair. Endonuclease that resolves HJ intermediates. Cleaves cruciform DNA by making single-stranded nicks across the HJ at symmetrical positions within the homologous arms, yielding a 5'-phosphate and a 3'-hydroxyl group; requires a central core of homology in the junction. The consensus cleavage sequence is 5'-(A/T)TT(C/G)-3'. Cleavage occurs on the 3'-side of the TT dinucleotide at the point of strand exchange. HJ branch migration catalyzed by RuvA-RuvB allows RuvC to scan DNA until it finds its consensus sequence, where it cleaves and resolves the cruciform DNA. This chain is Crossover junction endodeoxyribonuclease RuvC, found in Salinibacter ruber (strain DSM 13855 / M31).